The sequence spans 268 residues: Putative pyruvate, phosphate dikinase regulatory protein (268 aa).

ADP is bound at residue 147 to 154; it reads GLSRTSKT.

The protein belongs to the pyruvate, phosphate/water dikinase regulatory protein family. PDRP subfamily.

It catalyses the reaction N(tele)-phospho-L-histidyl/L-threonyl-[pyruvate, phosphate dikinase] + ADP = N(tele)-phospho-L-histidyl/O-phospho-L-threonyl-[pyruvate, phosphate dikinase] + AMP + H(+). The catalysed reaction is N(tele)-phospho-L-histidyl/O-phospho-L-threonyl-[pyruvate, phosphate dikinase] + phosphate + H(+) = N(tele)-phospho-L-histidyl/L-threonyl-[pyruvate, phosphate dikinase] + diphosphate. Functionally, bifunctional serine/threonine kinase and phosphorylase involved in the regulation of the pyruvate, phosphate dikinase (PPDK) by catalyzing its phosphorylation/dephosphorylation. The polypeptide is Putative pyruvate, phosphate dikinase regulatory protein (Clostridium beijerinckii (strain ATCC 51743 / NCIMB 8052) (Clostridium acetobutylicum)).